Consider the following 914-residue polypeptide: Chitin synthase B (914 aa).

Disordered stretches follow at residues 1 to 67 (MAYQ…TSGY) and 112 to 140 (YARS…GGGL). Gly residues predominate over residues 130–140 (GGAGSGGGGGL). Helical transmembrane passes span 543–562 (WLNG…GRMY), 586–606 (ILTW…MDLV), 627–647 (IVNT…FILA), 662–682 (SFVV…YLVV), 712–732 (AGII…ASFM), 843–863 (LVTF…SDGV), and 882–902 (ALLW…CWFL).

This sequence belongs to the chitin synthase family. Class III subfamily.

It localises to the cell membrane. It catalyses the reaction [(1-&gt;4)-N-acetyl-beta-D-glucosaminyl](n) + UDP-N-acetyl-alpha-D-glucosamine = [(1-&gt;4)-N-acetyl-beta-D-glucosaminyl](n+1) + UDP + H(+). Functionally, polymerizes chitin, a structural polymer of the cell wall and septum, by transferring the sugar moiety of UDP-GlcNAc to the non-reducing end of the growing chitin polymer. Plays an important role in septal growth or maintenance. Mediates colony spore formation. The polypeptide is Chitin synthase B (Aspergillus niger (strain ATCC MYA-4892 / CBS 513.88 / FGSC A1513)).